The sequence spans 355 residues: Alanine racemase (355 aa).

Catalysis depends on Lys34, which acts as the Proton acceptor; specific for D-alanine. Position 34 is an N6-(pyridoxal phosphate)lysine (Lys34). Arg133 lines the substrate pocket. Tyr249 (proton acceptor; specific for L-alanine) is an active-site residue. Residue Met297 coordinates substrate.

Belongs to the alanine racemase family. Pyridoxal 5'-phosphate is required as a cofactor.

The enzyme catalyses L-alanine = D-alanine. Its pathway is amino-acid biosynthesis; D-alanine biosynthesis; D-alanine from L-alanine: step 1/1. Its function is as follows. Catalyzes the interconversion of L-alanine and D-alanine. May also act on other amino acids. The sequence is that of Alanine racemase (alr) from Rickettsia peacockii (strain Rustic).